The following is a 387-amino-acid chain: 3-ketoacyl-CoA thiolase (387 aa).

Cys-91 serves as the catalytic Acyl-thioester intermediate. Catalysis depends on proton acceptor residues His-343 and Cys-373.

This sequence belongs to the thiolase-like superfamily. Thiolase family. Heterotetramer of two alpha chains (FadB) and two beta chains (FadA).

Its subcellular location is the cytoplasm. The catalysed reaction is an acyl-CoA + acetyl-CoA = a 3-oxoacyl-CoA + CoA. It participates in lipid metabolism; fatty acid beta-oxidation. Functionally, catalyzes the final step of fatty acid oxidation in which acetyl-CoA is released and the CoA ester of a fatty acid two carbons shorter is formed. The protein is 3-ketoacyl-CoA thiolase of Shewanella sp. (strain MR-4).